We begin with the raw amino-acid sequence, 202 residues long: Small ribosomal subunit protein uS2 (202 aa).

Belongs to the universal ribosomal protein uS2 family.

In Methanocorpusculum labreanum (strain ATCC 43576 / DSM 4855 / Z), this protein is Small ribosomal subunit protein uS2.